The chain runs to 340 residues: Heat-inducible transcription repressor HrcA (340 aa).

It belongs to the HrcA family.

Negative regulator of class I heat shock genes (grpE-dnaK-dnaJ and groELS operons). Prevents heat-shock induction of these operons. This chain is Heat-inducible transcription repressor HrcA, found in Burkholderia cenocepacia (strain ATCC BAA-245 / DSM 16553 / LMG 16656 / NCTC 13227 / J2315 / CF5610) (Burkholderia cepacia (strain J2315)).